The following is a 200-amino-acid chain: 3-isopropylmalate dehydratase small subunit 2 (200 aa).

The protein belongs to the LeuD family. LeuD type 1 subfamily. In terms of assembly, heterodimer of LeuC and LeuD.

The enzyme catalyses (2R,3S)-3-isopropylmalate = (2S)-2-isopropylmalate. The protein operates within amino-acid biosynthesis; L-leucine biosynthesis; L-leucine from 3-methyl-2-oxobutanoate: step 2/4. In terms of biological role, catalyzes the isomerization between 2-isopropylmalate and 3-isopropylmalate, via the formation of 2-isopropylmaleate. In Mannheimia succiniciproducens (strain KCTC 0769BP / MBEL55E), this protein is 3-isopropylmalate dehydratase small subunit 2.